Reading from the N-terminus, the 321-residue chain is tRNA-dihydrouridine synthase B (321 aa).

Residues 16–18 and Gln-70 each bind FMN; that span reads PMA. Cys-100 serves as the catalytic Proton donor. Residues Lys-139, 200 to 202, and 224 to 225 contribute to the FMN site; these read NGD and GR.

The protein belongs to the Dus family. DusB subfamily. Requires FMN as cofactor.

The catalysed reaction is a 5,6-dihydrouridine in tRNA + NAD(+) = a uridine in tRNA + NADH + H(+). It catalyses the reaction a 5,6-dihydrouridine in tRNA + NADP(+) = a uridine in tRNA + NADPH + H(+). Catalyzes the synthesis of 5,6-dihydrouridine (D), a modified base found in the D-loop of most tRNAs, via the reduction of the C5-C6 double bond in target uridines. This is tRNA-dihydrouridine synthase B from Shigella flexneri.